The primary structure comprises 158 residues: Transcription elongation factor GreA (158 aa).

The protein belongs to the GreA/GreB family.

Its function is as follows. Necessary for efficient RNA polymerase transcription elongation past template-encoded arresting sites. The arresting sites in DNA have the property of trapping a certain fraction of elongating RNA polymerases that pass through, resulting in locked ternary complexes. Cleavage of the nascent transcript by cleavage factors such as GreA or GreB allows the resumption of elongation from the new 3'terminus. GreA releases sequences of 2 to 3 nucleotides. This is Transcription elongation factor GreA from Psychrobacter arcticus (strain DSM 17307 / VKM B-2377 / 273-4).